We begin with the raw amino-acid sequence, 366 residues long: D-alanine--D-alanine ligase (366 aa).

One can recognise an ATP-grasp domain in the interval 144-347; the sequence is KRLLKDAGLK…YRELIENLIE (204 aa). 174 to 229 lines the ATP pocket; it reads KEELGLPMFIKPANQGSSVGVHKVENEEQFYSAIKDAFQFDHKLLVEEAIVGREIE. Mg(2+) contacts are provided by Asp-301, Glu-314, and Asn-316.

The protein belongs to the D-alanine--D-alanine ligase family. Mg(2+) is required as a cofactor. Requires Mn(2+) as cofactor.

It localises to the cytoplasm. It catalyses the reaction 2 D-alanine + ATP = D-alanyl-D-alanine + ADP + phosphate + H(+). It participates in cell wall biogenesis; peptidoglycan biosynthesis. In terms of biological role, cell wall formation. In Oceanobacillus iheyensis (strain DSM 14371 / CIP 107618 / JCM 11309 / KCTC 3954 / HTE831), this protein is D-alanine--D-alanine ligase.